The sequence spans 322 residues: Sideroflexin-1 (322 aa).

S2 carries the N-acetylserine modification. Over 2-102 (SGEVPPNINI…MSAQVPMNMT (101 aa)) the chain is Mitochondrial matrix. Residues 103–120 (ITGCMMTFYRTTPAVLFW) traverse the membrane as a helical segment. Over 121–146 (QWINQSFNAVVNYTNRSGDAPLTVNE) the chain is Mitochondrial intermembrane. A helical membrane pass occupies residues 147–167 (LGTAYVSATTGAVATALGLNA). The Mitochondrial matrix portion of the chain corresponds to 168–174 (LTKRVSP). A helical membrane pass occupies residues 175-195 (LIGRFVPFAAVAAANCINIPL). The Mitochondrial intermembrane portion of the chain corresponds to 196–228 (MRQRELKVGIPVTDENGTRLGESTNAAKQAITQ). Residues 229–249 (VVISRILMAAPGMAIPPFIMN) form a helical membrane-spanning segment. Topologically, residues 250–266 (TLEKKAFLKRFPWMSAP) are mitochondrial matrix. Residues 267–287 (IQVTLVGFCLVFATPLCCALF) traverse the membrane as a helical segment. Residues 288-322 (PQKSSMSVTSLEDELQASIQRTHPEIRRVYFNKGL) lie on the Mitochondrial intermembrane side of the membrane.

Belongs to the sideroflexin family. As to expression, widely expressed, with highest expression in kidney and liver.

It is found in the mitochondrion inner membrane. The catalysed reaction is L-serine(in) = L-serine(out). The enzyme catalyses L-alanine(in) = L-alanine(out). It carries out the reaction L-cysteine(in) = L-cysteine(out). In terms of biological role, amino acid transporter importing serine, an essential substrate of the mitochondrial branch of the one-carbon pathway, into mitochondria. Mitochondrial serine is then converted to glycine and formate, which exits to the cytosol where it is used to generate the charged folates that serve as one-carbon donors. May also transport other amino acids including alanine and cysteine. The polypeptide is Sideroflexin-1 (Mus musculus (Mouse)).